Reading from the N-terminus, the 361-residue chain is Histidinol-phosphate aminotransferase (361 aa).

An N6-(pyridoxal phosphate)lysine modification is found at Lys-218.

The protein belongs to the class-II pyridoxal-phosphate-dependent aminotransferase family. Histidinol-phosphate aminotransferase subfamily. Homodimer. Pyridoxal 5'-phosphate is required as a cofactor.

It catalyses the reaction L-histidinol phosphate + 2-oxoglutarate = 3-(imidazol-4-yl)-2-oxopropyl phosphate + L-glutamate. It participates in amino-acid biosynthesis; L-histidine biosynthesis; L-histidine from 5-phospho-alpha-D-ribose 1-diphosphate: step 7/9. This is Histidinol-phosphate aminotransferase from Ruegeria pomeroyi (strain ATCC 700808 / DSM 15171 / DSS-3) (Silicibacter pomeroyi).